Consider the following 636-residue polypeptide: DNA gyrase subunit B (636 aa).

Positions 421–535 (TELFIVEGDS…QGRVYIALPP (115 aa)) constitute a Toprim domain. Mg(2+)-binding residues include Glu-427, Asp-500, and Asp-502.

It belongs to the type II topoisomerase GyrB family. As to quaternary structure, heterotetramer, composed of two GyrA and two GyrB chains. In the heterotetramer, GyrA contains the active site tyrosine that forms a transient covalent intermediate with DNA, while GyrB binds cofactors and catalyzes ATP hydrolysis. Mg(2+) is required as a cofactor. Mn(2+) serves as cofactor. It depends on Ca(2+) as a cofactor.

It localises to the cytoplasm. The catalysed reaction is ATP-dependent breakage, passage and rejoining of double-stranded DNA.. A type II topoisomerase that negatively supercoils closed circular double-stranded (ds) DNA in an ATP-dependent manner to modulate DNA topology and maintain chromosomes in an underwound state. Negative supercoiling favors strand separation, and DNA replication, transcription, recombination and repair, all of which involve strand separation. Also able to catalyze the interconversion of other topological isomers of dsDNA rings, including catenanes and knotted rings. Type II topoisomerases break and join 2 DNA strands simultaneously in an ATP-dependent manner. In Thermotoga maritima (strain ATCC 43589 / DSM 3109 / JCM 10099 / NBRC 100826 / MSB8), this protein is DNA gyrase subunit B.